The sequence spans 154 residues: Putative pre-16S rRNA nuclease (154 aa).

The protein belongs to the YqgF nuclease family.

The protein localises to the cytoplasm. Functionally, could be a nuclease involved in processing of the 5'-end of pre-16S rRNA. This chain is Putative pre-16S rRNA nuclease, found in Rickettsia felis (strain ATCC VR-1525 / URRWXCal2) (Rickettsia azadi).